Reading from the N-terminus, the 124-residue chain is Small ribosomal subunit protein uS12 (124 aa).

The disordered stretch occupies residues 105–124 (QGVKNRKQARSRYGAKKEKG). Residues 108 to 118 (KNRKQARSRYG) are compositionally biased toward basic residues.

This sequence belongs to the universal ribosomal protein uS12 family. In terms of assembly, part of the 30S ribosomal subunit. Contacts proteins S8 and S17. May interact with IF1 in the 30S initiation complex.

With S4 and S5 plays an important role in translational accuracy. Its function is as follows. Interacts with and stabilizes bases of the 16S rRNA that are involved in tRNA selection in the A site and with the mRNA backbone. Located at the interface of the 30S and 50S subunits, it traverses the body of the 30S subunit contacting proteins on the other side and probably holding the rRNA structure together. The combined cluster of proteins S8, S12 and S17 appears to hold together the shoulder and platform of the 30S subunit. The chain is Small ribosomal subunit protein uS12 (rpsL) from Mycobacterium bovis (strain ATCC BAA-935 / AF2122/97).